The following is a 92-amino-acid chain: MKLAAIFLASSVLLSLLPIHLSQGEAAGERRQWCPSKQQVFRGSCSDDGGQKCLNDLLWTWNPSVRLSPIYCDCTPKRHNKRLCDCPSMICL.

The first 24 residues, 1 to 24 (MKLAAIFLASSVLLSLLPIHLSQG), serve as a signal peptide directing secretion. 4 cysteine pairs are disulfide-bonded: cysteine 34/cysteine 91, cysteine 45/cysteine 74, cysteine 53/cysteine 84, and cysteine 72/cysteine 86.

The protein belongs to the DEFL family.

The protein localises to the secreted. This Arabidopsis thaliana (Mouse-ear cress) protein is Defensin-like protein 249 (SCRL7).